Here is a 309-residue protein sequence, read N- to C-terminus: Protein FdhE homolog (309 aa).

The protein belongs to the FdhE family.

The protein resides in the cytoplasm. Its function is as follows. Necessary for formate dehydrogenase activity. The chain is Protein FdhE homolog from Yersinia pestis bv. Antiqua (strain Antiqua).